The primary structure comprises 132 residues: MNQFDEREEWYAFNQETIDALLEDGSQADADYTIEHHFASTDFDVLEKAAVDAFKAGFEVTDAEELMLDDGETIFCFDAVVERKLDIEKLNADADALLKIADKHDVTYDGWGTYFEPREEGEYEEEEHHLND.

It belongs to the RraB family. Interacts with the C-terminal region of Rne.

The protein resides in the cytoplasm. Functionally, globally modulates RNA abundance by binding to RNase E (Rne) and regulating its endonucleolytic activity. Can modulate Rne action in a substrate-dependent manner by altering the composition of the degradosome. The protein is Regulator of ribonuclease activity B of Alteromonas mediterranea (strain DSM 17117 / CIP 110805 / LMG 28347 / Deep ecotype).